A 421-amino-acid chain; its full sequence is Imidazolonepropionase (421 aa).

Fe(3+) contacts are provided by histidine 80 and histidine 82. The Zn(2+) site is built by histidine 80 and histidine 82. The 4-imidazolone-5-propanoate site is built by arginine 89, tyrosine 152, and histidine 185. Tyrosine 152 is a binding site for N-formimidoyl-L-glutamate. Position 249 (histidine 249) interacts with Fe(3+). Residue histidine 249 coordinates Zn(2+). Glutamate 252 contributes to the 4-imidazolone-5-propanoate binding site. Fe(3+) is bound at residue aspartate 324. Aspartate 324 is a Zn(2+) binding site. N-formimidoyl-L-glutamate contacts are provided by asparagine 326 and glycine 328. Residue serine 329 participates in 4-imidazolone-5-propanoate binding.

Belongs to the metallo-dependent hydrolases superfamily. HutI family. Requires Zn(2+) as cofactor. It depends on Fe(3+) as a cofactor.

The protein localises to the cytoplasm. The enzyme catalyses 4-imidazolone-5-propanoate + H2O = N-formimidoyl-L-glutamate. It functions in the pathway amino-acid degradation; L-histidine degradation into L-glutamate; N-formimidoyl-L-glutamate from L-histidine: step 3/3. Functionally, catalyzes the hydrolytic cleavage of the carbon-nitrogen bond in imidazolone-5-propanoate to yield N-formimidoyl-L-glutamate. It is the third step in the universal histidine degradation pathway. This Bacillus velezensis (strain DSM 23117 / BGSC 10A6 / LMG 26770 / FZB42) (Bacillus amyloliquefaciens subsp. plantarum) protein is Imidazolonepropionase.